The following is a 174-amino-acid chain: MLTLIQGKKIVNHLRSRLAFEYNGQLIKILSKNIVAVGSLRREEKMLNDVDLLIIVPEKKLLKHVLPNIRIKGLSFSVKVCGERKCVLFIEWEKKTYQLDLFTALAEEKPYAIFHFTGPVSYLIRIRAALKKKNYKLNQYGLFKNQTLVPLKITTEKELIKELGFTYRIPKKRL.

Residues 42–51 form an involved in ssDNA binding region; that stretch reads REEKMLNDVD. Mg(2+) is bound by residues aspartate 49 and aspartate 51. Cysteine 81 and cysteine 86 form a disulfide bridge. Aspartate 100 contacts Mg(2+).

The protein belongs to the DNA polymerase type-X family. Requires Mg(2+) as cofactor.

The protein localises to the virion. The catalysed reaction is DNA(n) + a 2'-deoxyribonucleoside 5'-triphosphate = DNA(n+1) + diphosphate. Its function is as follows. Error-prone polymerase lacking a proofreading 3'-5' exonuclease which catalyzes the gap-filling reaction during the DNA repair process. Specifically binds intermediates in the single-nucleotide base-excision repair process. Also catalyzes DNA polymerization with low nucleotide-insertion fidelity. Probably acts as a strategic DNA mutase, which gives rise to a rapid emergence of variants. Generates mismatched G-G pairs, in that case, the polymerase first binds the deoxynucleotide followed by mismatch formation. Together with the viral DNA ligase, fills the single nucleotide gaps generated by the AP endonuclease. Binds DNA with high affinity via the helix alphaE. The polypeptide is Repair DNA polymerase X (Ornithodoros (relapsing fever ticks)).